Consider the following 138-residue polypeptide: UPF0047 protein YjbQ (138 aa).

Belongs to the UPF0047 family.

The polypeptide is UPF0047 protein YjbQ (yjbQ) (Escherichia coli O157:H7).